We begin with the raw amino-acid sequence, 1409 residues long: Copia protein (1409 aa).

The CCHC-type zinc finger occupies valine 230–histidine 247. Aspartate 292 (for protease activity) is an active-site residue. The Integrase catalytic domain occupies histidine 476–lysine 644. Disordered stretches follow at residues serine 760–phenylalanine 780 and asparagine 805–isoleucine 851. The span at glutamate 827–glycine 841 shows a compositional bias: basic and acidic residues.

The sequence is that of Copia protein (GIP) from Drosophila melanogaster (Fruit fly).